Consider the following 236-residue polypeptide: uncharacterized protein (236 aa).

Positions 1-22 (MEFKMQKIILGMLVVTASNAMA) are cleaved as a signal peptide.

This is an uncharacterized protein from Pasteurella multocida (strain Pm70).